We begin with the raw amino-acid sequence, 337 residues long: Biotin synthase (337 aa).

The Radical SAM core domain maps to 58–283 (PEVEVEGIIS…RTILRFAGGR (226 aa)). [4Fe-4S] cluster is bound by residues Cys-73, Cys-77, and Cys-80. Residues Cys-116, Cys-149, Cys-208, and Arg-278 each coordinate [2Fe-2S] cluster.

This sequence belongs to the radical SAM superfamily. Biotin synthase family. As to quaternary structure, homodimer. [4Fe-4S] cluster is required as a cofactor. [2Fe-2S] cluster serves as cofactor.

The catalysed reaction is (4R,5S)-dethiobiotin + (sulfur carrier)-SH + 2 reduced [2Fe-2S]-[ferredoxin] + 2 S-adenosyl-L-methionine = (sulfur carrier)-H + biotin + 2 5'-deoxyadenosine + 2 L-methionine + 2 oxidized [2Fe-2S]-[ferredoxin]. It participates in cofactor biosynthesis; biotin biosynthesis; biotin from 7,8-diaminononanoate: step 2/2. Its function is as follows. Catalyzes the conversion of dethiobiotin (DTB) to biotin by the insertion of a sulfur atom into dethiobiotin via a radical-based mechanism. The protein is Biotin synthase of Rhodococcus jostii (strain RHA1).